We begin with the raw amino-acid sequence, 461 residues long: Transcription factor phm6 (461 aa).

Residues 18–50 (CNRCRNHKLKCVVTEAPNGTACCQRCIRAMVPC) constitute a DNA-binding region (zn(2)-C6 fungal-type). 2 disordered regions span residues 55 to 79 (RERKKRGSSPRVVPQSPWMHSPWET) and 256 to 278 (LQTDDSSSTQSESSRSRASVGAT). The segment covering 256–274 (LQTDDSSSTQSESSRSRAS) has biased composition (low complexity).

It localises to the nucleus. In terms of biological role, transcription factor that regulates the expression of the gene cluster that mediates the biosynthesis of the trans-fused decalin-containing tetramic acid phomasetin. The polypeptide is Transcription factor phm6 (Pyrenochaetopsis sp).